The primary structure comprises 330 residues: Succinylglutamate desuccinylase (330 aa).

The Zn(2+) site is built by His-53, Glu-56, and His-147. Residue Glu-210 is part of the active site.

It belongs to the AspA/AstE family. Succinylglutamate desuccinylase subfamily. The cofactor is Zn(2+).

The catalysed reaction is N-succinyl-L-glutamate + H2O = L-glutamate + succinate. It participates in amino-acid degradation; L-arginine degradation via AST pathway; L-glutamate and succinate from L-arginine: step 5/5. Functionally, transforms N(2)-succinylglutamate into succinate and glutamate. This chain is Succinylglutamate desuccinylase, found in Yersinia enterocolitica serotype O:8 / biotype 1B (strain NCTC 13174 / 8081).